The primary structure comprises 302 residues: tRNA pseudouridine synthase B (302 aa).

Aspartate 45 serves as the catalytic Nucleophile.

This sequence belongs to the pseudouridine synthase TruB family. Type 1 subfamily.

It catalyses the reaction uridine(55) in tRNA = pseudouridine(55) in tRNA. Its function is as follows. Responsible for synthesis of pseudouridine from uracil-55 in the psi GC loop of transfer RNAs. This chain is tRNA pseudouridine synthase B, found in Francisella tularensis subsp. tularensis (strain FSC 198).